The sequence spans 79 residues: Biotin synthase auxiliary protein (79 aa).

Belongs to the BsaP family. It depends on iron-sulfur cluster as a cofactor.

Its function is as follows. Required for the activity of the biotin synthase BioB. The protein is Biotin synthase auxiliary protein of Mycobacterium bovis (strain ATCC BAA-935 / AF2122/97).